The following is a 624-amino-acid chain: Outer dynein arm-docking complex subunit 4 (624 aa).

TPR repeat units follow at residues 11–44 (FPSYMAEGERLYLCGEFTKAIQSFTNALHLQSGD), 46–78 (NCLVARSKCYLKMGDLEKSLNDAEASLRNDPTF), 79–112 (CKGILQKAETLYTMGDFEFALVFYHRGYKLRPDR), 273–309 (LKSLEDIDMLLTSGSADGSLQKAEKVLKKVLEWNQEE), 318–351 (GNLYSCIGNAQIELGQMVAALQSHRKDLEIAKEH), 358–391 (SRALDNIGRVFARVGKFQQAIDTWEEKIPLAKTT), 395–428 (TWLFHEIGRCYLELDQAWQAQSYGEKSQQYAEEE), and 435–468 (LNASVLVAQAQVKLRDFESAVNNFEKALERAKLV). Residues 511-624 (MSQMDLQGAS…VQKLEKTKEE (114 aa)) form a disordered region. Basic and acidic residues-rich tracts occupy residues 520-557 (SEKEPLRGREEQERVVKQWERDQESEREATDDEQDRKS), 576-588 (IRRESREIYRRLS), and 595-624 (PSEDGSQKQEKKQAEAAKGEVQKLEKTKEE).

Component of the outer dynein arm-docking complex along with ODAD1, ODAD2, and ODAD3. Interacts with ODAD1; this interaction may facilitate the recruitment and/or attachment of outer dynein arm docking complex proteins, including ODAD1, ODAD3 and ODAD2, to ciliary axonemes. Interacts with components of the IFT complex A, including IFT140, TTC21B/IFT139 and WDR19/IFT144, and the IFT complex B, including IFT46, IFT52 and IFT57. Interacts with CFAP53.

Its subcellular location is the cell projection. The protein resides in the cilium. It localises to the cytoplasm. The protein localises to the cytoskeleton. It is found in the cilium axoneme. In terms of biological role, component of the outer dynein arm-docking complex (ODA-DC) that mediates outer dynein arms (ODA) binding onto the doublet microtubule. Plays an essential role for the assembly of ODA-DC and for the docking of ODA in ciliary axoneme. The polypeptide is Outer dynein arm-docking complex subunit 4 (Odad4) (Mus musculus (Mouse)).